The following is a 147-amino-acid chain: 3-dehydroquinate dehydratase (147 aa).

Residue Y23 is the Proton acceptor of the active site. Positions 74, 80, and 87 each coordinate substrate. Residue H100 is the Proton donor of the active site. Substrate-binding positions include 101–102 and R111; that span reads LS.

It belongs to the type-II 3-dehydroquinase family. Homododecamer.

It carries out the reaction 3-dehydroquinate = 3-dehydroshikimate + H2O. The protein operates within metabolic intermediate biosynthesis; chorismate biosynthesis; chorismate from D-erythrose 4-phosphate and phosphoenolpyruvate: step 3/7. Catalyzes a trans-dehydration via an enolate intermediate. The protein is 3-dehydroquinate dehydratase of Clostridium botulinum (strain ATCC 19397 / Type A).